We begin with the raw amino-acid sequence, 149 residues long: Transcriptional repressor NrdR (149 aa).

A zinc finger lies at 3–34 (CPFCSIQETKVIDSRLVADGHQVRRRRECTMC). Residues 49–139 (PRVVKRDGSR…VYRSFEDIRE (91 aa)) form the ATP-cone domain.

This sequence belongs to the NrdR family. It depends on Zn(2+) as a cofactor.

In terms of biological role, negatively regulates transcription of bacterial ribonucleotide reductase nrd genes and operons by binding to NrdR-boxes. The chain is Transcriptional repressor NrdR from Pseudoalteromonas atlantica (strain T6c / ATCC BAA-1087).